Reading from the N-terminus, the 541-residue chain is Light-independent protochlorophyllide reductase subunit B (541 aa).

Aspartate 36 serves as a coordination point for [4Fe-4S] cluster. The active-site Proton donor is aspartate 286. Substrate is bound at residue 421–422 (GM).

It belongs to the ChlB/BchB/BchZ family. As to quaternary structure, protochlorophyllide reductase is composed of three subunits; BchL, BchN and BchB. Forms a heterotetramer of two BchB and two BchN subunits. It depends on [4Fe-4S] cluster as a cofactor.

It catalyses the reaction chlorophyllide a + oxidized 2[4Fe-4S]-[ferredoxin] + 2 ADP + 2 phosphate = protochlorophyllide a + reduced 2[4Fe-4S]-[ferredoxin] + 2 ATP + 2 H2O. Its pathway is porphyrin-containing compound metabolism; bacteriochlorophyll biosynthesis (light-independent). Functionally, component of the dark-operative protochlorophyllide reductase (DPOR) that uses Mg-ATP and reduced ferredoxin to reduce ring D of protochlorophyllide (Pchlide) to form chlorophyllide a (Chlide). This reaction is light-independent. The NB-protein (BchN-BchB) is the catalytic component of the complex. The polypeptide is Light-independent protochlorophyllide reductase subunit B (Chloroflexus aurantiacus (strain ATCC 29364 / DSM 637 / Y-400-fl)).